The sequence spans 601 residues: Elongation factor 4 (601 aa).

Residues D5–Q187 enclose the tr-type G domain. GTP is bound by residues D17–T22 and N134–D137.

Belongs to the TRAFAC class translation factor GTPase superfamily. Classic translation factor GTPase family. LepA subfamily.

The protein localises to the cell inner membrane. The catalysed reaction is GTP + H2O = GDP + phosphate + H(+). Functionally, required for accurate and efficient protein synthesis under certain stress conditions. May act as a fidelity factor of the translation reaction, by catalyzing a one-codon backward translocation of tRNAs on improperly translocated ribosomes. Back-translocation proceeds from a post-translocation (POST) complex to a pre-translocation (PRE) complex, thus giving elongation factor G a second chance to translocate the tRNAs correctly. Binds to ribosomes in a GTP-dependent manner. The protein is Elongation factor 4 of Maridesulfovibrio salexigens (strain ATCC 14822 / DSM 2638 / NCIMB 8403 / VKM B-1763) (Desulfovibrio salexigens).